A 33-amino-acid polypeptide reads, in one-letter code: Dermaseptin-H9 (33 aa).

The residue at position 33 (Leu33) is a Leucine amide.

It belongs to the frog skin active peptide (FSAP) family. Dermaseptin subfamily. As to expression, expressed by the skin glands.

It localises to the secreted. Functionally, has antimicrobial activity. In Pithecopus hypochondrialis (Orange-legged leaf frog), this protein is Dermaseptin-H9.